Here is a 340-residue protein sequence, read N- to C-terminus: DNA-directed RNA polymerase subunit alpha (340 aa).

Residues 1–236 (MSVIQKNWQE…DQLQLFINFE (236 aa)) form an alpha N-terminal domain (alpha-NTD) region. The interval 252-340 (FNKNLLRKVD…DLAKKLEEPY (89 aa)) is alpha C-terminal domain (alpha-CTD).

It belongs to the RNA polymerase alpha chain family. As to quaternary structure, homodimer. The RNAP catalytic core consists of 2 alpha, 1 beta, 1 beta' and 1 omega subunit. When a sigma factor is associated with the core the holoenzyme is formed, which can initiate transcription.

The catalysed reaction is RNA(n) + a ribonucleoside 5'-triphosphate = RNA(n+1) + diphosphate. DNA-dependent RNA polymerase catalyzes the transcription of DNA into RNA using the four ribonucleoside triphosphates as substrates. The chain is DNA-directed RNA polymerase subunit alpha from Rhodospirillum rubrum (strain ATCC 11170 / ATH 1.1.1 / DSM 467 / LMG 4362 / NCIMB 8255 / S1).